A 464-amino-acid polypeptide reads, in one-letter code: Cysteine--tRNA ligase (464 aa).

Position 28 (C28) interacts with Zn(2+). Positions 30–40 match the 'HIGH' region motif; it reads PTVYDHSHIGH. Zn(2+) contacts are provided by C205, H230, and E234. Residues 263–267 carry the 'KMSKS' region motif; sequence KMSKS. Residue K266 participates in ATP binding.

This sequence belongs to the class-I aminoacyl-tRNA synthetase family. Requires Zn(2+) as cofactor.

The protein localises to the cytoplasm. It catalyses the reaction tRNA(Cys) + L-cysteine + ATP = L-cysteinyl-tRNA(Cys) + AMP + diphosphate. The polypeptide is Cysteine--tRNA ligase (Ignicoccus hospitalis (strain KIN4/I / DSM 18386 / JCM 14125)).